A 490-amino-acid chain; its full sequence is Betaine aldehyde dehydrogenase (490 aa).

Positions 27 and 93 each coordinate K(+). 150-152 contacts NAD(+); sequence GAW. The active-site Charge relay system is the K162. 176 to 179 contacts NAD(+); it reads KPSE. Residue V180 coordinates K(+). 230–233 is an NAD(+) binding site; that stretch reads GTDT. L246 contacts K(+). The active-site Proton acceptor is E252. G254, C286, and E387 together coordinate NAD(+). Residue C286 is the Nucleophile of the active site. Cysteine sulfenic acid (-SOH) is present on C286. Residues K457 and G460 each contribute to the K(+) site. E464 serves as the catalytic Charge relay system.

It belongs to the aldehyde dehydrogenase family. As to quaternary structure, dimer of dimers. It depends on K(+) as a cofactor.

It carries out the reaction betaine aldehyde + NAD(+) + H2O = glycine betaine + NADH + 2 H(+). It participates in amine and polyamine biosynthesis; betaine biosynthesis via choline pathway; betaine from betaine aldehyde: step 1/1. In terms of biological role, involved in the biosynthesis of the osmoprotectant glycine betaine. Catalyzes the irreversible oxidation of betaine aldehyde to the corresponding acid. This Pseudomonas savastanoi pv. phaseolicola (strain 1448A / Race 6) (Pseudomonas syringae pv. phaseolicola (strain 1448A / Race 6)) protein is Betaine aldehyde dehydrogenase.